The primary structure comprises 125 residues: Large ribosomal subunit protein bL17 (125 aa).

It belongs to the bacterial ribosomal protein bL17 family. As to quaternary structure, part of the 50S ribosomal subunit. Contacts protein L32.

This Acinetobacter baumannii (strain AB0057) protein is Large ribosomal subunit protein bL17.